A 499-amino-acid polypeptide reads, in one-letter code: Alpha-amylase A type-3 (499 aa).

The signal sequence occupies residues 1 to 21 (MMVAWWSLFLYGLQVAAPALA). An intrachain disulfide couples Cys51 to Cys59. A substrate-binding site is contributed by Trp104. Asn142 serves as a coordination point for Ca(2+). His143 lines the substrate pocket. A disulfide bridge links Cys171 with Cys185. Ca(2+) is bound by residues Glu183 and Asp196. Asn218 carries an N-linked (GlcNAc...) asparagine glycan. Arg225 is a binding site for substrate. Ca(2+)-binding residues include Asp227, His231, and Glu251. The active-site Nucleophile is the Asp227. 230–231 (KH) is a substrate binding site. The active-site Proton donor is Glu251. Position 255 (Gly255) interacts with substrate. Cys261 and Cys304 are joined by a disulfide. Residue Arg365 coordinates substrate. Cys461 and Cys496 are joined by a disulfide.

Belongs to the glycosyl hydrolase 13 family. In terms of assembly, monomer. Ca(2+) is required as a cofactor.

It is found in the secreted. It carries out the reaction Endohydrolysis of (1-&gt;4)-alpha-D-glucosidic linkages in polysaccharides containing three or more (1-&gt;4)-alpha-linked D-glucose units.. This Aspergillus oryzae (strain ATCC 42149 / RIB 40) (Yellow koji mold) protein is Alpha-amylase A type-3 (amy3).